Here is a 167-residue protein sequence, read N- to C-terminus: uncharacterized protein (167 aa).

Positions 1-21 (MFDFSFPTPASAGTRMGPASC) are disordered.

This is an uncharacterized protein from Homo sapiens (Human).